Reading from the N-terminus, the 195-residue chain is Protein aq_1444 (195 aa).

Residues 1-191 enclose the AMMECR1 domain; it reads MDIRELVHLG…EKEPFGEVER (191 aa).

This is Protein aq_1444 from Aquifex aeolicus (strain VF5).